Here is a 397-residue protein sequence, read N- to C-terminus: MAERVELLERRVRELERELELARGGRASARARIETMSPEVTDSNPYSRLMALKRMGIVKDYEKIRTFTVAIVGVGGVGSVTAEMLTRCGIGKLLLFDYDKVELANMNRLFFQPHQAGLSKVQAAEHTLRNINPDVQFEVHNYNITTLDNFEHFMDRISNGALEEGKPVDLVLSCVDNFEARMAINTACNELGQIWMESGVSENAVSGHIQLIIPGESACFACAPPLVVAANIDEKTLKREGVCAASLPTTMGVVAGILVQNVLKYLLNFGTVSYYLGYNAMQDFFPTMAMKPNPQCSDQNCRKQQENYKIKEAAQPKQEEIHQEEEIVHEDNDWGIELVSETTEDELKAASGPVPDLPVGITVAYTIPNKEENLTAEETVAESEESLEDLMAKMRNL.

The ATP site is built by Gly-76, Asp-97, Lys-120, Asn-143, and Asn-177. 2 residues coordinate Zn(2+): Cys-219 and Cys-222. Cys-243 serves as the catalytic Glycyl thioester intermediate. Zn(2+)-binding residues include Cys-296 and Cys-301. A UFM1-interacting sequence (UIS) motif is present at residues 327–339; sequence IVHEDNDWGIELV. Residues 340–370 form a linker region; it reads SETTEDELKAASGPVPDLPVGITVAYTIPNK. The UFC1-binding sequence (UFC) motif lies at 382–397; it reads ESEESLEDLMAKMRNL.

Belongs to the ubiquitin-activating E1 family. UBA5 subfamily. In terms of assembly, homodimer; homodimerization is required for UFM1 activation. Interacts (via UIS motif) with UFM1; binds UFM1 via a trans-binding mechanism in which UFM1 interacts with distinct sites in both subunits of the UBA5 homodimer. Interacts (via C-terminus) with UFC1.

The protein localises to the cytoplasm. The protein resides in the nucleus. It localises to the endoplasmic reticulum membrane. It is found in the golgi apparatus. Its function is as follows. E1-like enzyme which specifically catalyzes the first step in ufmylation. Activates UFM1 by first adenylating its C-terminal glycine residue with ATP, and thereafter linking this residue to the side chain of a cysteine residue in E1, yielding a UFM1-E1 thioester and free AMP. Activates UFM1 via a trans-binding mechanism, in which UFM1 interacts with distinct sites in both subunits of the UBA5 homodimer. Trans-binding also promotes stabilization of the UBA5 homodimer, and enhances ATP-binding. Transfer of UFM1 from UBA5 to the E2-like enzyme UFC1 also takes place using a trans mechanism. Ufmylation plays a key role in various processes, such as ribosome recycling, response to DNA damage, interferon response or reticulophagy (also called ER-phagy). In Gallus gallus (Chicken), this protein is Ubiquitin-like modifier-activating enzyme 5.